A 271-amino-acid polypeptide reads, in one-letter code: Acyl-[acyl-carrier-protein]--UDP-N-acetylglucosamine O-acyltransferase (271 aa).

The protein belongs to the transferase hexapeptide repeat family. LpxA subfamily. Homotrimer.

The protein localises to the cytoplasm. It carries out the reaction a (3R)-hydroxyacyl-[ACP] + UDP-N-acetyl-alpha-D-glucosamine = a UDP-3-O-[(3R)-3-hydroxyacyl]-N-acetyl-alpha-D-glucosamine + holo-[ACP]. It participates in glycolipid biosynthesis; lipid IV(A) biosynthesis; lipid IV(A) from (3R)-3-hydroxytetradecanoyl-[acyl-carrier-protein] and UDP-N-acetyl-alpha-D-glucosamine: step 1/6. Its function is as follows. Involved in the biosynthesis of lipid A, a phosphorylated glycolipid that anchors the lipopolysaccharide to the outer membrane of the cell. The protein is Acyl-[acyl-carrier-protein]--UDP-N-acetylglucosamine O-acyltransferase of Azorhizobium caulinodans (strain ATCC 43989 / DSM 5975 / JCM 20966 / LMG 6465 / NBRC 14845 / NCIMB 13405 / ORS 571).